We begin with the raw amino-acid sequence, 150 residues long: Toxin coregulated pilus biosynthesis protein Q (150 aa).

Functionally, involved in TCP pilus biogenesis. The sequence is that of Toxin coregulated pilus biosynthesis protein Q (tcpQ) from Vibrio cholerae serotype O1 (strain ATCC 39315 / El Tor Inaba N16961).